A 377-amino-acid polypeptide reads, in one-letter code: Succinyl-diaminopimelate desuccinylase (377 aa).

His-66 is a Zn(2+) binding site. The active site involves Asp-68. Zn(2+) is bound at residue Asp-99. The Proton acceptor role is filled by Glu-133. 3 residues coordinate Zn(2+): Glu-134, Glu-162, and His-348.

It belongs to the peptidase M20A family. DapE subfamily. Homodimer. It depends on Zn(2+) as a cofactor. Co(2+) serves as cofactor.

The enzyme catalyses N-succinyl-(2S,6S)-2,6-diaminopimelate + H2O = (2S,6S)-2,6-diaminopimelate + succinate. Its pathway is amino-acid biosynthesis; L-lysine biosynthesis via DAP pathway; LL-2,6-diaminopimelate from (S)-tetrahydrodipicolinate (succinylase route): step 3/3. In terms of biological role, catalyzes the hydrolysis of N-succinyl-L,L-diaminopimelic acid (SDAP), forming succinate and LL-2,6-diaminopimelate (DAP), an intermediate involved in the bacterial biosynthesis of lysine and meso-diaminopimelic acid, an essential component of bacterial cell walls. In Xylella fastidiosa (strain M23), this protein is Succinyl-diaminopimelate desuccinylase.